The chain runs to 198 residues: V-type proton ATPase subunit E (198 aa).

This sequence belongs to the V-ATPase E subunit family.

In terms of biological role, produces ATP from ADP in the presence of a proton gradient across the membrane. The chain is V-type proton ATPase subunit E from Borrelia turicatae (strain 91E135).